The chain runs to 595 residues: MHRTHHCAQLTTSQLGATVSLLGWVDTIRDQGGIIFVDLRDRKGITQIQLEPHENAKLAEQVKQLKPESVIGITGKVVRRPAGTENPALPTGEVEVVASSLEIHNISDTPPFPLDDAGGDKVNEDLRLTYRYLDLRRPKMRKNLQVRHRAAKSIRDYFDAQEFIEVETPALFKSTPEGAREYLVPSRIHPGQFYALSQSPQQFKQILMVAGVEKYFQIARCFRDEDLRADRQMEFTQVDVEASFVTREDIYALFEGMLKKVWKDVLDVDIPTPFPRMAFHDAMNRYGVDKPDVRFALELADFSELFKNSAFKVFQSTVAGGGVVKALNAKGLADLTQGELKSMEDTAKSLGAKGLAFIKVEGGEWKSPIVKFFTEPEKAELTKRLNIEEGDIIFFAAAPWEKACAILGRLRLESAAFLQKRGKLTIRHDDWQFLWVIDFPLMTYDEAENRYVATHHPFTAPVPDDTQYLDSDPKKVRGQHYDVVLNGMELGGGSIRIHQPVLQKKVFEDVLKIPQDVVESRFGYMLKAFTYGAPPHGGIAFGLDRMVALLCGTTSIRDVIAFPKTQKGQDLMAQSPTPVTPRQLKDLHIQTVMPE.

Glu-177 lines the L-aspartate pocket. An aspartate region spans residues 201–204 (QQFK). Arg-223 contacts L-aspartate. Residues 223–225 (RDE) and Gln-232 each bind ATP. His-455 contacts L-aspartate. Glu-489 is a binding site for ATP. Arg-496 contributes to the L-aspartate binding site. 542–545 (GLDR) lines the ATP pocket.

This sequence belongs to the class-II aminoacyl-tRNA synthetase family. Type 1 subfamily. Homodimer.

The protein resides in the cytoplasm. It carries out the reaction tRNA(Asx) + L-aspartate + ATP = L-aspartyl-tRNA(Asx) + AMP + diphosphate. Aspartyl-tRNA synthetase with relaxed tRNA specificity since it is able to aspartylate not only its cognate tRNA(Asp) but also tRNA(Asn). Reaction proceeds in two steps: L-aspartate is first activated by ATP to form Asp-AMP and then transferred to the acceptor end of tRNA(Asp/Asn). The polypeptide is Aspartate--tRNA(Asp/Asn) ligase (Opitutus terrae (strain DSM 11246 / JCM 15787 / PB90-1)).